A 695-amino-acid polypeptide reads, in one-letter code: G-protein coupled receptor-associated protein LMBRD2 (695 aa).

Over 1–5 (MSGAA) the chain is Extracellular. The helical transmembrane segment at 6–21 (LGLEIVFVFFLALFLL) threads the bilayer. The Cytoplasmic portion of the chain corresponds to 22–32 (HRYGDFKKQHR). Residues 33–53 (LVIIGTLLAWYLCFLIVFILP) traverse the membrane as a helical segment. Over 54–105 (LDVSTTIYNRCKHAAANSSPPENSNITGLYATANPVPSQHPCFKPWSYIPDG) the chain is Extracellular. The N-linked (GlcNAc...) asparagine glycan is linked to asparagine 78. A helical membrane pass occupies residues 106–126 (IMPIFWRVVYWTSQFLTWILL). Residues 127–150 (PFMQSYARSGGFSITGKIKTALIE) are Cytoplasmic-facing. Residues 151 to 171 (NAIYYGTYLLIFGAFLIYVAV) form a helical membrane-spanning segment. At 172–186 (NPHLHLEWNQLQTIG) the chain is on the extracellular side. Residues 187–207 (IAAANTWGLFLLVLLLGYGLV) form a helical membrane-spanning segment. At 208–387 (EIPRSYWNGA…ECLLRPWFYK (180 aa)) the chain is on the cytoplasmic side. The stretch at 227–262 (YFKAAKLMTEKADAEENLEDAMEEVRKVNESIKYNH) forms a coiled coil. The helical transmembrane segment at 388 to 408 (ILAVVLSIFSVIVVWSECTFF) threads the bilayer. At 409–432 (STTPVLSLFAVFIQLAEKTYNYIY) the chain is on the extracellular side. The helical transmembrane segment at 433 to 453 (IEIACFLSIFFLSICVYSTVF) threads the bilayer. The Cytoplasmic segment spans residues 454–473 (RIRVFNYYYLASHHQTDAYS). Residues 474–494 (LLFSGMLFCRLTPPLCLNFLG) form a helical membrane-spanning segment. Over 495 to 521 (LTHMDSSISHKNTQPTAYTSIMGSMKV) the chain is Extracellular. Residues 522-542 (LSFIADGFYIYYPMLVVILCI) form a helical membrane-spanning segment. The Cytoplasmic portion of the chain corresponds to 543–695 (ATYFSLGTRC…MSRSDIFNDV (153 aa)). Residues 571–603 (LVNEGKELIRKEKRKRQRQEEGENRRREWKERY) are a coiled coil. The segment at 581–628 (KEKRKRQRQEEGENRRREWKERYGHNREDSTRNRNIHTDPKESNFSDV) is disordered. Basic and acidic residues predominate over residues 588 to 624 (RQEEGENRRREWKERYGHNREDSTRNRNIHTDPKESN). The residue at position 633 (serine 633) is a Phosphoserine. The segment at 662–682 (AETFTDDPLESESGRYQPGGR) is disordered.

Belongs to the LIMR family.

It is found in the cell membrane. In terms of biological role, recruited to ligand-activated beta-2 adrenergic receptor/ADRB2, it negatively regulates the adrenergic receptor signaling pathway. May also regulate other G-protein coupled receptors including type-1 angiotensin II receptor/AGTR1. In Homo sapiens (Human), this protein is G-protein coupled receptor-associated protein LMBRD2.